The primary structure comprises 463 residues: MLAFLNQVRKPTLDLPLDVRRKMWFKPFMQSYLVVFIGYLTMYLIRKNFNIAQNDMISTYGLSMTELGMIGLGFSITYGVGKTLVSYYADGKNTKQFLPFMLILSAICMLGFSASMGAGSTSLFLMIAFYALSGFFQSTGGSCSYSTITKWTPRRKRGTFLGFWNISHNLGGAGAAGVALFGANYLFDGHVIGMFIFPSIIALIVGFIGLRFGSDSPESYGLGKAEELFGEEISEEDKETEENEMTKWQIFVEYVLKNKVIWLLCFSNIFLYVVRIGIDQWSTVYAFQELKLSKEVAIQGFTLFEVGALVGTLLWGWLSDLANGRRALVACVALALIIATLGVYQHASNQYVYLASLFALGFLVFGPQLLIGVAAVGFVPKKAIGAADGIKGTFAYLIGDSFAKLGLGMIADGTPVFGLTGWAGTFAALDAAAIGCICLMAMVAVMEERKIRREKKIQQVNIA.

The Cytoplasmic portion of the chain corresponds to 1 to 24 (MLAFLNQVRKPTLDLPLDVRRKMW). The helical transmembrane segment at 25-45 (FKPFMQSYLVVFIGYLTMYLI) threads the bilayer. Over 46-60 (RKNFNIAQNDMISTY) the chain is Periplasmic. A helical transmembrane segment spans residues 61-81 (GLSMTELGMIGLGFSITYGVG). At 82 to 96 (KTLVSYYADGKNTKQ) the chain is on the cytoplasmic side. The helical transmembrane segment at 97 to 117 (FLPFMLILSAICMLGFSASMG) threads the bilayer. The Periplasmic portion of the chain corresponds to 118 to 122 (AGSTS). A helical transmembrane segment spans residues 123–143 (LFLMIAFYALSGFFQSTGGSC). Residues 144-159 (SYSTITKWTPRRKRGT) lie on the Cytoplasmic side of the membrane. The chain crosses the membrane as a helical span at residues 160–180 (FLGFWNISHNLGGAGAAGVAL). Residues 181-189 (FGANYLFDG) lie on the Periplasmic side of the membrane. The helical transmembrane segment at 190–210 (HVIGMFIFPSIIALIVGFIGL) threads the bilayer. Residues 211–259 (RFGSDSPESYGLGKAEELFGEEISEEDKETEENEMTKWQIFVEYVLKNK) are Cytoplasmic-facing. Residues 260-280 (VIWLLCFSNIFLYVVRIGIDQ) traverse the membrane as a helical segment. Over 281 to 297 (WSTVYAFQELKLSKEVA) the chain is Periplasmic. Residues 298–318 (IQGFTLFEVGALVGTLLWGWL) form a helical membrane-spanning segment. Residues 319-326 (SDLANGRR) lie on the Cytoplasmic side of the membrane. Residues 327–347 (ALVACVALALIIATLGVYQHA) traverse the membrane as a helical segment. Residues 348-357 (SNQYVYLASL) are Periplasmic-facing. A helical transmembrane segment spans residues 358 to 378 (FALGFLVFGPQLLIGVAAVGF). Residues 379–382 (VPKK) lie on the Cytoplasmic side of the membrane. Residues 383 to 403 (AIGAADGIKGTFAYLIGDSFA) form a helical membrane-spanning segment. The Periplasmic segment spans residues 404 to 425 (KLGLGMIADGTPVFGLTGWAGT). A helical membrane pass occupies residues 426 to 446 (FAALDAAAIGCICLMAMVAVM). Topologically, residues 447-463 (EERKIRREKKIQQVNIA) are cytoplasmic.

Belongs to the major facilitator superfamily. Organophosphate:Pi antiporter (OPA) (TC 2.A.1.4) family.

The protein localises to the cell inner membrane. In terms of biological role, mediates the exchange of external hexose 6-phosphate and internal inorganic phosphate. The sequence is that of Hexose-6-phosphate:phosphate antiporter (uhpT) from Salmonella typhimurium (strain LT2 / SGSC1412 / ATCC 700720).